The sequence spans 498 residues: uncharacterized protein (498 aa).

Disordered stretches follow at residues 1–48, 99–134, and 190–209; these read MSND…ARPK, NDLH…GNSK, and NSEN…TSSN. Residues 35–44 are compositionally biased toward polar residues; that stretch reads ELSTPKQVNQ. Over residues 99 to 110 the composition is skewed to basic and acidic residues; that stretch reads NDLHPLDNDSTR. Residues 111–126 show a composition bias toward polar residues; the sequence is TSKTLKNSSEVLTASK.

This is an uncharacterized protein from Schizosaccharomyces pombe (strain 972 / ATCC 24843) (Fission yeast).